Here is a 241-residue protein sequence, read N- to C-terminus: Uridylate kinase (241 aa).

Residue 14-17 (KLSG) participates in ATP binding. An involved in allosteric activation by GTP region spans residues 22–27 (GNQGFG). Gly-56 is a UMP binding site. Residues Gly-57 and Arg-61 each contribute to the ATP site. UMP is bound by residues Asp-76 and 137 to 144 (TGNPYFTT). Thr-164, Tyr-170, and Asp-173 together coordinate ATP.

This sequence belongs to the UMP kinase family. Homohexamer.

The protein localises to the cytoplasm. It catalyses the reaction UMP + ATP = UDP + ADP. It functions in the pathway pyrimidine metabolism; CTP biosynthesis via de novo pathway; UDP from UMP (UMPK route): step 1/1. With respect to regulation, allosterically activated by GTP. Inhibited by UTP. Its function is as follows. Catalyzes the reversible phosphorylation of UMP to UDP. This is Uridylate kinase from Syntrophotalea carbinolica (strain DSM 2380 / NBRC 103641 / GraBd1) (Pelobacter carbinolicus).